Consider the following 312-residue polypeptide: Putative endonuclease 4 (312 aa).

Positions 84, 127, 166, 202, 205, 239, 252, 254, and 284 each coordinate Zn(2+).

The protein belongs to the AP endonuclease 2 family. Zn(2+) is required as a cofactor.

It catalyses the reaction Endonucleolytic cleavage to 5'-phosphooligonucleotide end-products.. Its function is as follows. Endonuclease IV plays a role in DNA repair. It cleaves phosphodiester bonds at apurinic or apyrimidinic sites (AP sites) to produce new 5'-ends that are base-free deoxyribose 5-phosphate residues. This is Putative endonuclease 4 from Acanthamoeba polyphaga (Amoeba).